The sequence spans 91 residues: Small ribosomal subunit protein eS24 (91 aa).

The tract at residues Gln-51–Arg-91 is disordered.

It belongs to the eukaryotic ribosomal protein eS24 family.

The sequence is that of Small ribosomal subunit protein eS24 from Caenorhabditis elegans.